We begin with the raw amino-acid sequence, 563 residues long: NAD(P)H-quinone oxidoreductase chain 4 (563 aa).

The next 15 helical transmembrane spans lie at 25 to 45 (FPWL…VPFI), 56 to 76 (WFAL…YLYG), 90 to 110 (VSWL…ISMP), 111 to 131 (LILL…PVTF), 133 to 153 (PKLF…VFAV), 157 to 177 (LLFF…LAIW), 189 to 209 (FIIY…AMGF), 230 to 250 (GFQL…LPIV), 264 to 284 (TAPV…YALM), 298 to 318 (FAPL…LTSF), 335 to 355 (MGFV…GAML), 356 to 376 (QMIS…ATYD), 397 to 417 (FALW…SGFV), 438 to 458 (IVIA…LLSM), and 485 to 505 (VYII…PRLM).

This sequence belongs to the complex I subunit 4 family.

It localises to the cellular thylakoid membrane. It carries out the reaction a plastoquinone + NADH + (n+1) H(+)(in) = a plastoquinol + NAD(+) + n H(+)(out). The enzyme catalyses a plastoquinone + NADPH + (n+1) H(+)(in) = a plastoquinol + NADP(+) + n H(+)(out). Its function is as follows. NDH-1 shuttles electrons from NAD(P)H, via FMN and iron-sulfur (Fe-S) centers, to quinones in the respiratory chain. The immediate electron acceptor for the enzyme in this species is believed to be plastoquinone. Couples the redox reaction to proton translocation (for every two electrons transferred, four hydrogen ions are translocated across the cytoplasmic membrane), and thus conserves the redox energy in a proton gradient. In Prochlorococcus marinus (strain MIT 9313), this protein is NAD(P)H-quinone oxidoreductase chain 4.